The sequence spans 121 residues: Protein yippee-like 5 (121 aa).

A Yippee domain is found at R13 to E110. Residues C17, C20, C73, and C76 each coordinate Zn(2+). The residue at position 118 (S118) is a Phosphoserine.

This sequence belongs to the yippee family. As to quaternary structure, identified in the CTLH complex that contains GID4, RANBP9 and/or RANBP10, MKLN1, MAEA, RMND5A (or alternatively its paralog RMND5B), GID8, ARMC8, WDR26 and YPEL5. Within this complex, MAEA, RMND5A (or alternatively its paralog RMND5B), GID8, WDR26, and RANBP9 and/or RANBP10 form the catalytic core, while GID4, MKLN1, ARMC8 and YPEL5 have ancillary roles. Interacts with RANBP9 and RANBP10.

It is found in the nucleus. Its subcellular location is the cytoplasm. The protein localises to the cytoskeleton. The protein resides in the microtubule organizing center. It localises to the centrosome. It is found in the spindle pole. Its subcellular location is the midbody. Functionally, component of the CTLH E3 ubiquitin-protein ligase complex that selectively accepts ubiquitin from UBE2H and mediates ubiquitination and subsequent proteasomal degradation of the transcription factor HBP1. Required for normal cell proliferation. In Bos taurus (Bovine), this protein is Protein yippee-like 5 (YPEL5).